A 174-amino-acid chain; its full sequence is Crossover junction endodeoxyribonuclease RuvC (174 aa).

Catalysis depends on residues D16, E76, and D148. Residues D16, E76, and D148 each contribute to the Mg(2+) site.

Belongs to the RuvC family. In terms of assembly, homodimer which binds Holliday junction (HJ) DNA. The HJ becomes 2-fold symmetrical on binding to RuvC with unstacked arms; it has a different conformation from HJ DNA in complex with RuvA. In the full resolvosome a probable DNA-RuvA(4)-RuvB(12)-RuvC(2) complex forms which resolves the HJ. Mg(2+) serves as cofactor.

It is found in the cytoplasm. The enzyme catalyses Endonucleolytic cleavage at a junction such as a reciprocal single-stranded crossover between two homologous DNA duplexes (Holliday junction).. Functionally, the RuvA-RuvB-RuvC complex processes Holliday junction (HJ) DNA during genetic recombination and DNA repair. Endonuclease that resolves HJ intermediates. Cleaves cruciform DNA by making single-stranded nicks across the HJ at symmetrical positions within the homologous arms, yielding a 5'-phosphate and a 3'-hydroxyl group; requires a central core of homology in the junction. The consensus cleavage sequence is 5'-(A/T)TT(C/G)-3'. Cleavage occurs on the 3'-side of the TT dinucleotide at the point of strand exchange. HJ branch migration catalyzed by RuvA-RuvB allows RuvC to scan DNA until it finds its consensus sequence, where it cleaves and resolves the cruciform DNA. The chain is Crossover junction endodeoxyribonuclease RuvC from Rhodopseudomonas palustris (strain BisA53).